Reading from the N-terminus, the 107-residue chain is Death-associated protein-like 1 (107 aa).

Positions 1-23 (MANEVQDLLSPRKGGHPPAVKAG) are disordered.

Expressed in hair follicle (at protein level).

Its function is as follows. May play a role in the early stages of epithelial differentiation or in apoptosis. This Homo sapiens (Human) protein is Death-associated protein-like 1 (DAPL1).